Reading from the N-terminus, the 505-residue chain is Probable Xaa-Pro aminopeptidase Pc16g13390 (505 aa).

The Mn(2+) site is built by Asp-287, Asp-298, Glu-436, and Glu-475.

Belongs to the peptidase M24B family. It depends on Mn(2+) as a cofactor.

The enzyme catalyses Release of any N-terminal amino acid, including proline, that is linked to proline, even from a dipeptide or tripeptide.. Catalyzes the removal of a penultimate prolyl residue from the N-termini of peptides. This chain is Probable Xaa-Pro aminopeptidase Pc16g13390, found in Penicillium rubens (strain ATCC 28089 / DSM 1075 / NRRL 1951 / Wisconsin 54-1255) (Penicillium chrysogenum).